Here is a 128-residue protein sequence, read N- to C-terminus: EPIDERMAL PATTERNING FACTOR-like protein 2 (128 aa).

A signal peptide spans 1–28 (MVWSSNMSSFLLILLILNSTHFSLMANG). Disulfide bonds link Cys60–Cys119, Cys65–Cys71, and Cys68–Cys121. The segment covering 79 to 90 (NPQTKLHSPLTT) has biased composition (polar residues). The segment at 79 to 100 (NPQTKLHSPLTTSSSSSSETIH) is disordered.

This sequence belongs to the plant cysteine rich small secretory peptide family. Epidermal patterning factor subfamily.

Its subcellular location is the secreted. Controls stomatal patterning. The polypeptide is EPIDERMAL PATTERNING FACTOR-like protein 2 (Arabidopsis thaliana (Mouse-ear cress)).